Reading from the N-terminus, the 1931-residue chain is Chitin synthase 5 (1931 aa).

One can recognise a Myosin motor domain in the interval 11 to 777 (LGVTDLSSLA…LFRFLEDRLR (767 aa)). ATP is bound at residue 122-129 (GPTGSGKS). N510, N538, and N676 each carry an N-linked (GlcNAc...) asparagine glycan. An actin-binding region spans residues 655–677 (VDSLLKSFDQTQTWYIFALRPND). A disordered region spans residues 798–817 (DPFSPHRYQPTSFDSQDHVY). N-linked (GlcNAc...) asparagine glycosylation is present at N842. Transmembrane regions (helical) follow at residues 912 to 932 (WVWLCSILTWWIPGFLLSKIA) and 951 to 971 (MIIWFICGCAIFVIAILGPVI). Residues N1062, N1078, and N1146 are each glycosylated (N-linked (GlcNAc...) asparagine). Residues 1220 to 1240 (ILLALSCVMVAVIGFKFLSAL) traverse the membrane as a helical segment. An N-linked (GlcNAc...) asparagine glycan is attached at N1583. 3 consecutive transmembrane segments (helical) span residues 1615-1635 (LSTIIAPVTVAYIVYLIYLIV), 1641-1661 (IPTLSIIMLAAIYGLQAMIFI), and 1668-1688 (MIAWMIFYICAIPVFSFLLPL). The disordered stretch occupies residues 1826–1847 (AHRPSLDDTSSFHQPYQPAPRP). The 56-residue stretch at 1875 to 1930 (AITDSQLERSIRKICANAELDKLTKKGVRKELEREYGVELTERREAINRLVEKVLT) folds into the DEK-C domain.

This sequence in the N-terminal section; belongs to the TRAFAC class CC myosin-kinesin ATPase superfamily. Myosin family. The protein in the C-terminal section; belongs to the chitin synthase family. Class V subfamily.

The protein resides in the cell membrane. It is found in the cell septum. It localises to the cell tip. It catalyses the reaction [(1-&gt;4)-N-acetyl-beta-D-glucosaminyl](n) + UDP-N-acetyl-alpha-D-glucosamine = [(1-&gt;4)-N-acetyl-beta-D-glucosaminyl](n+1) + UDP + H(+). Polymerizes chitin, a structural polymer of the cell wall and septum, by transferring the sugar moiety of UDP-GlcNAc to the non-reducing end of the growing chitin polymer. Produces a large proportion of the chitin that is not deacetylated to chitosan. The polypeptide is Chitin synthase 5 (Cryptococcus neoformans var. grubii serotype A (strain H99 / ATCC 208821 / CBS 10515 / FGSC 9487) (Filobasidiella neoformans var. grubii)).